The primary structure comprises 425 residues: Endoplasmic reticulum junction formation protein lunapark (425 aa).

The N-myristoyl glycine moiety is linked to residue G2. The Cytoplasmic segment spans residues 2–45 (GGLFSRWRAKPSTVEVLENIDKEIQALEEFREKNQRLQKLWVGR). Positions 15-41 (VEVLENIDKEIQALEEFREKNQRLQKL) form a coiled coil. Residues 46–66 (LIIYSSILYLFTCLIVYLWYL) traverse the membrane as a helical segment. Residues 67 to 77 (PDEFTARLVMT) are Lumenal-facing. A helical membrane pass occupies residues 78–98 (LPFFAFPLIIWTLRTVLIFFF). Residues 99–425 (SKRTERNNEA…EPSEESLVTK (327 aa)) lie on the Cytoplasmic side of the membrane. Positions 101-128 (RTERNNEALDDLKSQKKKILEEVMEKET) form a coiled coil. S114, S153, S177, S182, and S194 each carry phosphoserine. Positions 144–242 (KKAKEFEPPS…HPPGPPLARP (99 aa)) are disordered. Residues 186 to 195 (GPPPQGPVSP) show a composition bias toward pro residues. Phosphothreonine is present on T211. S222 carries the post-translational modification Phosphoserine. A C4-type; plays a role in ER morphology zinc finger spans residues 271 to 296 (CQQCFSHNGMALKEEFEYIAFRCAYC). 3 positions are modified to phosphoserine: S316, S348, and S380. The disordered stretch occupies residues 320-425 (RQAVEGSSST…EPSEESLVTK (106 aa)). Residues 384–398 (EPAENQEETENEETS) are compositionally biased toward acidic residues. Position 411 is a phosphoserine (S411).

The protein belongs to the lunapark family. In terms of assembly, homodimer; homodimerization requires the C4-type zinc finger motif and decreases during mitosis in a phosphorylation-dependent manner. In terms of processing, myristoylated; myristoylation is necessary for the endoplasmic reticulum (ER) three-way ER tubular junction formation, but is not required neither for membrane translocation, membrane topology formation, nor for the specific localization to ER membranes. Phosphorylated. Phosphorylation occurs at Ser-177, Ser-182, Ser-222, Ser-316 and Ser-380 during interphase. Phosphorylation occurs at Ser-114, Ser-153, Ser-194, Thr-211 and Ser-348 during mitosis; these phosphorylations reduce both its homodimerization and the ER three-way tubular junction formation. Post-translationally, subject to proteasomal degradation following phosphorylation during mitosis. As to expression, expressed in most tissues at basal level, with reinforcement in distal limb buds, genital bud, and in parts of the central nervous system.

It localises to the endoplasmic reticulum membrane. Its function is as follows. Endoplasmic reticulum (ER)-shaping membrane protein that plays a role in determining ER morphology. Involved in the stabilization of nascent three-way ER tubular junctions within the ER network. May also play a role as a curvature-stabilizing protein within three-way ER tubular junction network. May be involved in limb and central nervous system development. The sequence is that of Endoplasmic reticulum junction formation protein lunapark from Mus musculus (Mouse).